The sequence spans 194 residues: HTH-type transcriptional regulator BetI (194 aa).

Positions 8 to 68 (EIRRAQLIDA…ATMRHVLRDL (61 aa)) constitute an HTH tetR-type domain. The H-T-H motif DNA-binding region spans 31–50 (TLASVAQRANISTGIVSHYF).

It functions in the pathway amine and polyamine biosynthesis; betaine biosynthesis via choline pathway [regulation]. Repressor involved in the biosynthesis of the osmoprotectant glycine betaine. It represses transcription of the choline transporter BetT and the genes of BetAB involved in the synthesis of glycine betaine. The chain is HTH-type transcriptional regulator BetI from Burkholderia lata (strain ATCC 17760 / DSM 23089 / LMG 22485 / NCIMB 9086 / R18194 / 383).